We begin with the raw amino-acid sequence, 497 residues long: MEASAAEQPSSPPPPLGDHCIHDGDFVVLKREDVFKAVQVQRRKKVTFEKQWFYLDNAIGHSYGSAFDVSSGGSLQLRKKLEEPASETKEAGTDNRNIVDDGKSQKLTQDDIKALKDKGIKGEEIVQQLIENSTTFRDKTEFAQDKYIKKKKKKYEAIVTILKPSTRILSIMYYAREPGKINHMRYDTLAQMLTLGNIRAGNKMIVMETCSGLVLGAMMERMGGFGSIIQLYPGDGPVRAATACFGFPKSFLSGLYEFPLNKVNSLLNGTFSAEMLSSEPKDSTPVEESNGELEEKEIAEQADEDNIVDAAENNSGEQRPMEIVPGDPENKEPKEKRSKRDYIQEKQRRQEEQRKRHLEAAALLGERNADGLIVASRFHPTPLLLSLLDFVAPSRPFVVYCQYKEPLLECYTKLRERGGVINLRLSETWLRNYQVLPDRSHPKLLMSGGGGYLLSGFTVVSDSLRADPSLKSCTGALDPHKAEEPAAKKQKCMESAS.

The interval 81 to 103 is disordered; it reads LEEPASETKEAGTDNRNIVDDGK. The interval 95–105 is substrate; the sequence is NRNIVDDGKSQ. T108 is subject to Phosphothreonine. 2 substrate regions span residues 146 to 155 and 176 to 183; these read KYIKKKKKKY and REPGKINH. The disordered stretch occupies residues 275–354; sequence MLSSEPKDST…EKQRRQEEQR (80 aa). A compositionally biased stretch (acidic residues) spans 289-307; the sequence is SNGELEEKEIAEQADEDNI. Residues 328-354 show a composition bias toward basic and acidic residues; the sequence is PENKEPKEKRSKRDYIQEKQRRQEEQR. Positions 349 and 377 each coordinate substrate. Substrate regions lie at residues 415-423 and 434-441; these read RERGGVINL and QVLPDRSH. The disordered stretch occupies residues 474 to 497; the sequence is TGALDPHKAEEPAAKKQKCMESAS. Basic and acidic residues predominate over residues 478 to 487; the sequence is DPHKAEEPAA.

It belongs to the TRM6/GCD10 family. In terms of assembly, heterotetramer; composed of two copies of TRMT6 and two copies of TRMT61A.

The protein localises to the nucleus. Substrate-binding subunit of tRNA (adenine-N(1)-)-methyltransferase, which catalyzes the formation of N(1)-methyladenine at position 58 (m1A58) in initiator methionyl-tRNA. Together with the TRMT61A catalytic subunit, part of a mRNA N(1)-methyltransferase complex that mediates methylation of adenosine residues at the N(1) position of a small subset of mRNAs: N(1) methylation takes place in tRNA T-loop-like structures of mRNAs and is only present at low stoichiometries. This is tRNA (adenine(58)-N(1))-methyltransferase non-catalytic subunit TRM6 (Trmt6) from Mus musculus (Mouse).